The primary structure comprises 634 residues: Threonine--tRNA ligase (634 aa).

The TGS domain occupies 1-61; that stretch reads MINITLPDGS…DHDASLRIIT (61 aa). The interval 243 to 534 is catalytic; it reads DHRRIGKAQD…LIEHHAGAFP (292 aa). The Zn(2+) site is built by Cys334, His385, and His511.

This sequence belongs to the class-II aminoacyl-tRNA synthetase family. Homodimer. Requires Zn(2+) as cofactor.

It localises to the cytoplasm. The catalysed reaction is tRNA(Thr) + L-threonine + ATP = L-threonyl-tRNA(Thr) + AMP + diphosphate + H(+). Its function is as follows. Catalyzes the attachment of threonine to tRNA(Thr) in a two-step reaction: L-threonine is first activated by ATP to form Thr-AMP and then transferred to the acceptor end of tRNA(Thr). Also edits incorrectly charged L-seryl-tRNA(Thr). This chain is Threonine--tRNA ligase, found in Xanthomonas euvesicatoria pv. vesicatoria (strain 85-10) (Xanthomonas campestris pv. vesicatoria).